The chain runs to 635 residues: Threonine--tRNA ligase (635 aa).

Residues 1–61 enclose the TGS domain; it reads MINISFPDGS…DNDCKLRILT (61 aa). The segment at 242 to 533 is catalytic; it reads DHRKLGRELD…LIEEYAGRFP (292 aa). Zn(2+) is bound by residues Cys-333, His-384, and His-510.

Belongs to the class-II aminoacyl-tRNA synthetase family. Homodimer. The cofactor is Zn(2+).

Its subcellular location is the cytoplasm. The catalysed reaction is tRNA(Thr) + L-threonine + ATP = L-threonyl-tRNA(Thr) + AMP + diphosphate + H(+). Functionally, catalyzes the attachment of threonine to tRNA(Thr) in a two-step reaction: L-threonine is first activated by ATP to form Thr-AMP and then transferred to the acceptor end of tRNA(Thr). Also edits incorrectly charged L-seryl-tRNA(Thr). This is Threonine--tRNA ligase from Rickettsia peacockii (strain Rustic).